The following is a 330-amino-acid chain: Aspartate--ammonia ligase (330 aa).

The protein belongs to the class-II aminoacyl-tRNA synthetase family. AsnA subfamily.

The protein resides in the cytoplasm. The catalysed reaction is L-aspartate + NH4(+) + ATP = L-asparagine + AMP + diphosphate + H(+). The protein operates within amino-acid biosynthesis; L-asparagine biosynthesis; L-asparagine from L-aspartate (ammonia route): step 1/1. In Streptococcus agalactiae serotype Ia (strain ATCC 27591 / A909 / CDC SS700), this protein is Aspartate--ammonia ligase.